A 334-amino-acid polypeptide reads, in one-letter code: Protein-methionine-sulfoxide reductase catalytic subunit MsrP (334 aa).

A signal peptide (tat-type signal) is located at residues 1–44; it reads MKKIRPLTEADVTAESAFFMQRRQVLKALGISAAALSLPSTAQA. Mo-molybdopterin is bound by residues asparagine 88, 91 to 92, cysteine 146, threonine 181, asparagine 233, arginine 238, and 249 to 251; these read YE and GIK.

Belongs to the MsrP family. As to quaternary structure, heterodimer of a catalytic subunit (MsrP) and a heme-binding subunit (MsrQ). It depends on Mo-molybdopterin as a cofactor. Predicted to be exported by the Tat system. The position of the signal peptide cleavage has not been experimentally proven.

The protein resides in the periplasm. It catalyses the reaction L-methionyl-[protein] + a quinone + H2O = L-methionyl-(S)-S-oxide-[protein] + a quinol. The enzyme catalyses L-methionyl-[protein] + a quinone + H2O = L-methionyl-(R)-S-oxide-[protein] + a quinol. In terms of biological role, part of the MsrPQ system that repairs oxidized periplasmic proteins containing methionine sulfoxide residues (Met-O), using respiratory chain electrons. Thus protects these proteins from oxidative-stress damage caused by reactive species of oxygen and chlorine generated by the host defense mechanisms. MsrPQ is essential for the maintenance of envelope integrity under bleach stress, rescuing a wide series of structurally unrelated periplasmic proteins from methionine oxidation, including the primary periplasmic chaperone SurA and the lipoprotein Pal. The catalytic subunit MsrP is non-stereospecific, being able to reduce both (R-) and (S-) diastereoisomers of methionine sulfoxide. The protein is Protein-methionine-sulfoxide reductase catalytic subunit MsrP of Salmonella newport (strain SL254).